A 355-amino-acid polypeptide reads, in one-letter code: Protein RecA (355 aa).

Position 65-72 (65-72 (GPESSGKT)) interacts with ATP.

This sequence belongs to the RecA family.

The protein resides in the cytoplasm. Its function is as follows. Can catalyze the hydrolysis of ATP in the presence of single-stranded DNA, the ATP-dependent uptake of single-stranded DNA by duplex DNA, and the ATP-dependent hybridization of homologous single-stranded DNAs. It interacts with LexA causing its activation and leading to its autocatalytic cleavage. The chain is Protein RecA from Pseudomonas entomophila (strain L48).